The following is a 92-amino-acid chain: DNA-directed RNA polymerase subunit Rpo11 (92 aa).

This sequence belongs to the archaeal Rpo11/eukaryotic RPB11/RPC19 RNA polymerase subunit family. Part of the RNA polymerase complex.

The protein localises to the cytoplasm. The enzyme catalyses RNA(n) + a ribonucleoside 5'-triphosphate = RNA(n+1) + diphosphate. Functionally, DNA-dependent RNA polymerase (RNAP) catalyzes the transcription of DNA into RNA using the four ribonucleoside triphosphates as substrates. This chain is DNA-directed RNA polymerase subunit Rpo11, found in Pyrobaculum aerophilum (strain ATCC 51768 / DSM 7523 / JCM 9630 / CIP 104966 / NBRC 100827 / IM2).